Reading from the N-terminus, the 269-residue chain is 5'-nucleotidase SurE (269 aa).

Residues Asp11, Asp12, Ser43, and Asn101 each coordinate a divalent metal cation.

It belongs to the SurE nucleotidase family. The cofactor is a divalent metal cation.

Its subcellular location is the cytoplasm. The catalysed reaction is a ribonucleoside 5'-phosphate + H2O = a ribonucleoside + phosphate. Its function is as follows. Nucleotidase that shows phosphatase activity on nucleoside 5'-monophosphates. The protein is 5'-nucleotidase SurE of Synechococcus sp. (strain WH7803).